Consider the following 309-residue polypeptide: Homoserine kinase (309 aa).

Residue 91-101 participates in ATP binding; it reads PIGSGLGSSAC.

It belongs to the GHMP kinase family. Homoserine kinase subfamily.

It localises to the cytoplasm. It catalyses the reaction L-homoserine + ATP = O-phospho-L-homoserine + ADP + H(+). The protein operates within amino-acid biosynthesis; L-threonine biosynthesis; L-threonine from L-aspartate: step 4/5. Functionally, catalyzes the ATP-dependent phosphorylation of L-homoserine to L-homoserine phosphate. The polypeptide is Homoserine kinase (Salmonella dublin (strain CT_02021853)).